The chain runs to 243 residues: Vesicle-associated membrane protein-associated protein B (243 aa).

An N-acetylalanine modification is found at alanine 2. Residues 2-218 lie on the Cytoplasmic side of the membrane; sequence AKVEQVLSLE…AALAATGKEE (217 aa). Residues 7–124 enclose the MSP domain; sequence VLSLEPQHEL…MDSKLRCVFE (118 aa). Serine 146 bears the Phosphoserine mark. Lysine 147 participates in a covalent cross-link: Glycyl lysine isopeptide (Lys-Gly) (interchain with G-Cter in SUMO1). Phosphoserine occurs at positions 156 and 159. Residues 161-196 are a coiled coil; the sequence is LDDTEVKKVMEECRRLQGEVQRLREESRQLKEEDGL. Serine 206 is subject to Phosphoserine. Residues 219 to 239 traverse the membrane as a helical; Anchor for type IV membrane protein segment; sequence GLSARLLALVVLFFIVGVIIG.

The protein belongs to the VAMP-associated protein (VAP) (TC 9.B.17) family. Homodimer, and heterodimer with VAPA. Interacts with VAMP1 and VAMP2. Interacts (via MSP domain) with ZFYVE27. Interacts with RMDN3. Interacts with KIF5A in a ZFYVE27-dependent manner. Interacts (via MSP domain) with STARD3 (via phospho-FFAT motif). Interacts with STARD3NL (via FFAT motif). Interacts with CERT1. Interacts with PLEKHA3 and SACM1L to form a ternary complex. Interacts with VPS13A (via FFAT motif). Interacts with RB1CC1 (via phosphorylated FFAT motif), MIGA2 (via phosphorylated FFAT motif), RMDN3 (via phosphorylated FFAT motif), OSBPL1A (via FFAT motif), KCNB1 (via phosphorylated FFAT motif) and KCNB2 (via phosphorylated FFAT motif). Interacts (via MSP domain) with WDR44 (via FFAT motif); the interactions connect the endoplasmic reticulum (ER) with the endosomal tubule.

It is found in the endoplasmic reticulum membrane. Its function is as follows. Endoplasmic reticulum (ER)-anchored protein that mediates the formation of contact sites between the ER and endosomes via interaction with FFAT motif-containing proteins such as STARD3 or WDR44. Interacts with STARD3 in a FFAT motif phosphorylation dependent manner. Via interaction with WDR44 participates in neosynthesized protein export. Participates in the endoplasmic reticulum unfolded protein response (UPR) by inducing ERN1/IRE1 activity. Involved in cellular calcium homeostasis regulation. The polypeptide is Vesicle-associated membrane protein-associated protein B (Mus musculus (Mouse)).